A 570-amino-acid chain; its full sequence is Methionine--tRNA ligase (570 aa).

Residues 11 to 21 (PYVQTVPHLGN) carry the 'HIGH' region motif. Positions 143, 146, 156, and 159 each coordinate Zn(2+). The 'KMSKS' region motif lies at 333 to 337 (KFSKS). Residue Lys336 participates in ATP binding.

It belongs to the class-I aminoacyl-tRNA synthetase family. MetG type 1 subfamily. Zn(2+) serves as cofactor.

Its subcellular location is the cytoplasm. The enzyme catalyses tRNA(Met) + L-methionine + ATP = L-methionyl-tRNA(Met) + AMP + diphosphate. Is required not only for elongation of protein synthesis but also for the initiation of all mRNA translation through initiator tRNA(fMet) aminoacylation. This chain is Methionine--tRNA ligase, found in Pyrobaculum arsenaticum (strain DSM 13514 / JCM 11321 / PZ6).